The following is a 281-amino-acid chain: RAD52 motif-containing protein 1 (281 aa).

Residues 1 to 92 (MAELISFVVP…KPLFQTSPVK (92 aa)) form a necessary for nuclear localization and for nucleolar accumulation in response to heat shock region. One can recognise an RRM domain in the interval 15 to 98 (KVLLVWDLST…SPVKVRLGTR (84 aa)). A necessary for nuclear and nucleolar localization region spans residues 90 to 133 (PVKVRLGTRHKALQHQAFALNSSRCQELANYYFGFSGWSKRIIK).

Homodimer.

The protein resides in the nucleus. It is found in the cytoplasm. Its subcellular location is the nucleolus. It localises to the cajal body. The protein localises to the PML body. Its function is as follows. May confer resistance to the antitumor agent cisplatin. Binds to DNA and RNA. This is RAD52 motif-containing protein 1 (Rdm1) from Mus musculus (Mouse).